Here is an 878-residue protein sequence, read N- to C-terminus: Phosphoenolpyruvate carboxylase (878 aa).

Catalysis depends on residues His-140 and Lys-545.

Belongs to the PEPCase type 1 family. The cofactor is Mg(2+).

It catalyses the reaction oxaloacetate + phosphate = phosphoenolpyruvate + hydrogencarbonate. Forms oxaloacetate, a four-carbon dicarboxylic acid source for the tricarboxylic acid cycle. In Pseudomonas syringae pv. syringae (strain B728a), this protein is Phosphoenolpyruvate carboxylase.